A 363-amino-acid polypeptide reads, in one-letter code: Protein LEG1 homolog (363 aa).

A signal peptide spans 1 to 19 (MQCVWTLSLLQLVALWANA). N-linked (GlcNAc...) asparagine glycosylation is found at Asn-79, Asn-261, and Asn-292.

This sequence belongs to the LEG1 family.

Its subcellular location is the secreted. Functionally, may be involved in early liver development. The protein is Protein LEG1 homolog of Oncorhynchus mykiss (Rainbow trout).